The chain runs to 206 residues: Protein phosphatase inhibitor 2 (206 aa).

Residues 1–36 are disordered; the sequence is MAASTASHRPIKGILKNKTSAASPPVVPSAEQPRPI. Ala-2 carries the post-translational modification N-acetylalanine. The tract at residues 12–17 is required for binding PPP1CC; the sequence is KGILKN. The required for binding the 'RVXF' binding groove of PPP1CC stretch occupies residues 44-56; that stretch reads KSQKWDEMNILAT. Residue Ser-45 is modified to Phosphoserine; by ATM. Phosphothreonine is present on Thr-74. A disordered region spans residues 75 to 143; sequence PYHNMIGDDE…EREKKRQFEM (69 aa). Acidic residues predominate over residues 81–92; the sequence is GDDEDAYSDSEG. Ser-88 and Ser-90 each carry phosphoserine. 2 positions are modified to phosphothreonine: Thr-97 and Thr-117. A compositionally biased stretch (basic and acidic residues) spans 111–121; the sequence is SEPKYRTREQE. 3 positions are modified to phosphoserine: Ser-122, Ser-123, and Ser-131. Acidic residues predominate over residues 122–131; the sequence is SSGEEDNDLS. A compositionally biased stretch (basic and acidic residues) spans 132–143; it reads PEEREKKRQFEM. Residues 148–151 are required for binding PPP1CC catalytic center, displacing metal ions and inhibition of PPP1CC catalytic activity; that stretch reads HYNE. Positions 164 to 206 are disordered; sequence KDLHDDDEDEEMAETADGDSMNVEESSQGSTTSDHLQHKSQSS. Residues 168–180 are compositionally biased toward acidic residues; the sequence is DDDEDEEMAETAD. Polar residues predominate over residues 186–206; it reads VEESSQGSTTSDHLQHKSQSS.

Belongs to the protein phosphatase inhibitor 2 family. As to quaternary structure, heterodimer with PP1. Post-translationally, phosphorylation on Ser-45 by ATM activates PP1 by dissociating the PP1-PPP1R2 complex. Phosphorylation on Thr-74 by GSK3 activates PP1 by dissociating the PP1-PPP1R2 complex.

Its function is as follows. Inhibitor of protein-phosphatase 1. In Mus musculus (Mouse), this protein is Protein phosphatase inhibitor 2 (Ppp1r2).